Reading from the N-terminus, the 217-residue chain is MYLFHLCLVFACVSCPTVQASKLCLGWLWDMDIDPYKEFGSSYQLLNFLPLDFFPELNALVDTATALYEEELTGREHCSPHHTAIRQALVCWEELTRLIAWMSANINSEEVRRVIVAHVNDTWGLKVRQNLWFHLSCLTFGQHTVQEFLVSFGVRIRTPAPYRPPNAPILSTLPEHTVIRRRGSARVVRSPRRRTPSPRRRRSQSPRRRPQSPASNC.

The N-terminal stretch at 1–20 (MYLFHLCLVFACVSCPTVQA) is a signal peptide. Positions 26 to 28 (GWL) are HBEAG. Positions 181-210 (RRGSARVVRSPRRRTPSPRRRRSQSPRRRP) are enriched in basic residues. The segment at 181-217 (RRGSARVVRSPRRRTPSPRRRRSQSPRRRPQSPASNC) is disordered. One copy of the 1; half-length repeat lies at 190–196 (SPRRRTP). Positions 190–211 (SPRRRTPSPRRRRSQSPRRRPQ) are 3 X 8 AA approximate repeats of S-P-R-R-R-R-[PS]-Q. Residues 190–217 (SPRRRTPSPRRRRSQSPRRRPQSPASNC) constitute a propeptide that is removed on maturation. 2 tandem repeats follow at residues 197-204 (SPRRRRSQ) and 205-211 (SPRRRPQ).

The protein belongs to the orthohepadnavirus precore antigen family. In terms of assembly, homodimerizes. In terms of processing, phosphorylated. Post-translationally, cleaved by host furin.

Its subcellular location is the secreted. It is found in the host nucleus. May regulate immune response to the intracellular capsid in acting as a T-cell tolerogen, by having an immunoregulatory effect which prevents destruction of infected cells by cytotoxic T-cells. This immune regulation may predispose to chronicity during perinatal infections and prevent severe liver injury during adult infections. The protein is External core antigen of Urocitellus parryii kennicottii (ASHV).